The sequence spans 448 residues: MCDSKDNSGVSEKCGKKFTNYPLNTTPTSLNYNLPEISKKFYNLKNKYSRNGYGLSKTEFPSSIENCPSNEYSIMYDNKDPRFLIRFLLDDGRYIIADRDDGEVFDEAPTYLDNNNHPIISRHYTGEERQKFEQVGSGDYITGEQFFQFYTQNKTRVLSNCRALDSRTILLSTAKIFPIYPPASETQLTAFVNSSFYAAAIPQLPQTSLLENIPEPTSLDDSGVLPKDAVRAVKGSALLPCIIVHDPNLNNSDKMKFNTYYLLEYKEYWHQLWSQIIPAHQTVKIQERTGISEVVQNSMIEDLNMYIGADFGMYFYLRSSGFKEQITRGLNRPLSQTPTQLGERVEEMEYYNSNDLDVRYVKHALAREFTLKRVNGEIVKNWVAVDYRMAGIQSYPNAPITNPLTLTKHTIIRCENSYDGHIFKTPLIFKNGEVIVKTNEELIPKINQ.

The segment at 19-200 (TNYPLNTTPT…FVNSSFYAAA (182 aa)) is beta-trefoil domain. A disulfide bridge links cysteine 67 with cysteine 161. The segment at 226–407 (PKDAVRAVKG…APITNPLTLT (182 aa)) is probable pore-forming domain.

Belongs to the toxin_10 family. As to quaternary structure, forms a heterodimer with BinA. Processed by proteases extracted from mosquito larval gut.

It localises to the spore. Its subcellular location is the perispore. Component of a binary toxin active against Culex and some Aedes mosquito larvae. This subunit is responsible for localized binding to specific regions of the host larval gut. The individual subunits are not toxic. BinAB and this subunit alone bind to the gastric caecum and posterior midgut of C.quinquefasciatus larvae. Binary toxin internalization into host gut cells requires both proteins. Does not bind to the midgut of Aedes aegypti. Toxic to Aedes atropalpus mosquito larvae; mortality towards both C.quinquefasciatus and A.atropalpus is maximal by 48 hours. A.aegypti is not very susceptible to this toxin. Binding component of binary toxin. The 51 kDa polypeptide acts synergetically with the 42 kDa polypeptide for expression of a larvicidal toxin. This is Binary larvicide subunit BinB from Lysinibacillus sphaericus (Bacillus sphaericus).